The following is a 215-amino-acid chain: NADH-quinone oxidoreductase subunit C (215 aa).

Belongs to the complex I 30 kDa subunit family. NDH-1 is composed of 14 different subunits. Subunits NuoB, C, D, E, F, and G constitute the peripheral sector of the complex.

It is found in the cell inner membrane. It carries out the reaction a quinone + NADH + 5 H(+)(in) = a quinol + NAD(+) + 4 H(+)(out). In terms of biological role, NDH-1 shuttles electrons from NADH, via FMN and iron-sulfur (Fe-S) centers, to quinones in the respiratory chain. The immediate electron acceptor for the enzyme in this species is believed to be ubiquinone. Couples the redox reaction to proton translocation (for every two electrons transferred, four hydrogen ions are translocated across the cytoplasmic membrane), and thus conserves the redox energy in a proton gradient. This Dinoroseobacter shibae (strain DSM 16493 / NCIMB 14021 / DFL 12) protein is NADH-quinone oxidoreductase subunit C.